A 112-amino-acid chain; its full sequence is Putative pterin-4-alpha-carbinolamine dehydratase (112 aa).

The protein belongs to the pterin-4-alpha-carbinolamine dehydratase family.

The enzyme catalyses (4aS,6R)-4a-hydroxy-L-erythro-5,6,7,8-tetrahydrobiopterin = (6R)-L-erythro-6,7-dihydrobiopterin + H2O. In Shewanella amazonensis (strain ATCC BAA-1098 / SB2B), this protein is Putative pterin-4-alpha-carbinolamine dehydratase.